We begin with the raw amino-acid sequence, 1374 residues long: DNA-directed RNA polymerase subunit beta (1374 aa).

The protein belongs to the RNA polymerase beta chain family. As to quaternary structure, the RNAP catalytic core consists of 2 alpha, 1 beta, 1 beta' and 1 omega subunit. When a sigma factor is associated with the core the holoenzyme is formed, which can initiate transcription.

It catalyses the reaction RNA(n) + a ribonucleoside 5'-triphosphate = RNA(n+1) + diphosphate. Its function is as follows. DNA-dependent RNA polymerase catalyzes the transcription of DNA into RNA using the four ribonucleoside triphosphates as substrates. The polypeptide is DNA-directed RNA polymerase subunit beta (Rhodopseudomonas palustris (strain BisB5)).